Consider the following 119-residue polypeptide: Large ribosomal subunit protein bL20 (119 aa).

Belongs to the bacterial ribosomal protein bL20 family.

Binds directly to 23S ribosomal RNA and is necessary for the in vitro assembly process of the 50S ribosomal subunit. It is not involved in the protein synthesizing functions of that subunit. The polypeptide is Large ribosomal subunit protein bL20 (Rhodopseudomonas palustris (strain BisB18)).